Here is a 350-residue protein sequence, read N- to C-terminus: Anthranilate phosphoribosyltransferase (350 aa).

5-phospho-alpha-D-ribose 1-diphosphate contacts are provided by residues Gly94, 97-98, Thr102, 104-107, 122-130, and Ser134; these read GD, NIST, and KHGNRSVSS. Gly94 is a binding site for anthranilate. Ser106 contacts Mg(2+). Residue Asn125 coordinates anthranilate. Arg180 provides a ligand contact to anthranilate. Mg(2+)-binding residues include Asp239 and Glu240.

This sequence belongs to the anthranilate phosphoribosyltransferase family. As to quaternary structure, homodimer. Mg(2+) serves as cofactor.

It catalyses the reaction N-(5-phospho-beta-D-ribosyl)anthranilate + diphosphate = 5-phospho-alpha-D-ribose 1-diphosphate + anthranilate. The protein operates within amino-acid biosynthesis; L-tryptophan biosynthesis; L-tryptophan from chorismate: step 2/5. Its function is as follows. Catalyzes the transfer of the phosphoribosyl group of 5-phosphorylribose-1-pyrophosphate (PRPP) to anthranilate to yield N-(5'-phosphoribosyl)-anthranilate (PRA). The polypeptide is Anthranilate phosphoribosyltransferase (Geotalea daltonii (strain DSM 22248 / JCM 15807 / FRC-32) (Geobacter daltonii)).